A 312-amino-acid chain; its full sequence is Protoheme IX farnesyltransferase (312 aa).

The next 8 helical transmembrane spans lie at 34–54, 56–76, 119–139, 152–172, 179–199, 225–245, 247–267, and 283–303; these read LVIF…HPVL, FTAI…NMAL, ALVN…YVVI, IVIG…AATG, LLLF…LALF, ILLY…LGYF, WVYG…AINV, and LFAF…LDVL.

Belongs to the UbiA prenyltransferase family. Protoheme IX farnesyltransferase subfamily.

It is found in the cell inner membrane. It catalyses the reaction heme b + (2E,6E)-farnesyl diphosphate + H2O = Fe(II)-heme o + diphosphate. The protein operates within porphyrin-containing compound metabolism; heme O biosynthesis; heme O from protoheme: step 1/1. Converts heme B (protoheme IX) to heme O by substitution of the vinyl group on carbon 2 of heme B porphyrin ring with a hydroxyethyl farnesyl side group. This Nitrobacter hamburgensis (strain DSM 10229 / NCIMB 13809 / X14) protein is Protoheme IX farnesyltransferase.